Consider the following 340-residue polypeptide: tRNA N6-adenosine threonylcarbamoyltransferase (340 aa).

H115 and H119 together coordinate Fe cation. Substrate is bound by residues V138–G142, D171, G184, D188, and N278. D306 serves as a coordination point for Fe cation.

Belongs to the KAE1 / TsaD family. Fe(2+) serves as cofactor.

The protein localises to the cytoplasm. It carries out the reaction L-threonylcarbamoyladenylate + adenosine(37) in tRNA = N(6)-L-threonylcarbamoyladenosine(37) in tRNA + AMP + H(+). Functionally, required for the formation of a threonylcarbamoyl group on adenosine at position 37 (t(6)A37) in tRNAs that read codons beginning with adenine. Is involved in the transfer of the threonylcarbamoyl moiety of threonylcarbamoyl-AMP (TC-AMP) to the N6 group of A37, together with TsaE and TsaB. TsaD likely plays a direct catalytic role in this reaction. This is tRNA N6-adenosine threonylcarbamoyltransferase from Clostridium botulinum (strain Hall / ATCC 3502 / NCTC 13319 / Type A).